The sequence spans 384 residues: Putative spore germination protein YfkR (384 aa).

The N-terminal stretch at 1 to 20 (MKKTIYKCVLPLLICILLTG) is a signal peptide. A lipid anchor (N-palmitoyl cysteine) is attached at cysteine 21. Cysteine 21 carries S-diacylglycerol cysteine lipidation.

This sequence belongs to the GerABKC lipoprotein family.

It localises to the cell membrane. May be involved in spore germination. This Bacillus subtilis (strain 168) protein is Putative spore germination protein YfkR (yfkR).